We begin with the raw amino-acid sequence, 72 residues long: Prokaryotic ubiquitin-like protein Pup (72 aa).

A compositionally biased stretch (gly residues) spans 1–10; it reads MATKDTGGGQ. The disordered stretch occupies residues 1–45; the sequence is MATKDTGGGQQKATRSTEEVEEQAQDAQASEDLAERQEKLSDDVD. A coiled-coil region spans residues 10–60; sequence QQKATRSTEEVEEQAQDAQASEDLAERQEKLSDDVDSVLDEIDDVLEENAE. Residues 28-66 form an ARC ATPase binding region; that stretch reads QASEDLAERQEKLSDDVDSVLDEIDDVLEENAEDFVRSF. Positions 33 to 42 are enriched in basic and acidic residues; the sequence is LAERQEKLSD. Q72 carries the post-translational modification Deamidated glutamine. Q72 participates in a covalent cross-link: Isoglutamyl lysine isopeptide (Gln-Lys) (interchain with K-? in acceptor proteins).

This sequence belongs to the prokaryotic ubiquitin-like protein family. Strongly interacts with the proteasome-associated ATPase ARC through a hydrophobic interface; the interacting region of Pup lies in its C-terminal half. There is one Pup binding site per ARC hexamer ring. Post-translationally, is modified by deamidation of its C-terminal glutamine to glutamate by the deamidase Dop, a prerequisite to the subsequent pupylation process.

Its pathway is protein degradation; proteasomal Pup-dependent pathway. In terms of biological role, protein modifier that is covalently attached to lysine residues of substrate proteins, thereby targeting them for proteasomal degradation. The tagging system is termed pupylation. In Streptomyces griseus subsp. griseus (strain JCM 4626 / CBS 651.72 / NBRC 13350 / KCC S-0626 / ISP 5235), this protein is Prokaryotic ubiquitin-like protein Pup.